A 388-amino-acid polypeptide reads, in one-letter code: 1D-myo-inositol 2-acetamido-2-deoxy-alpha-D-glucopyranoside deacetylase (388 aa).

His-6, Asp-9, and His-144 together coordinate Zn(2+). Positions Leu-369–Arg-388 are disordered.

Belongs to the MshB deacetylase family. Zn(2+) is required as a cofactor.

The catalysed reaction is 1D-myo-inositol 2-acetamido-2-deoxy-alpha-D-glucopyranoside + H2O = 1D-myo-inositol 2-amino-2-deoxy-alpha-D-glucopyranoside + acetate. In terms of biological role, catalyzes the deacetylation of 1D-myo-inositol 2-acetamido-2-deoxy-alpha-D-glucopyranoside (GlcNAc-Ins) in the mycothiol biosynthesis pathway. This chain is 1D-myo-inositol 2-acetamido-2-deoxy-alpha-D-glucopyranoside deacetylase, found in Corynebacterium kroppenstedtii (strain DSM 44385 / JCM 11950 / CIP 105744 / CCUG 35717).